Reading from the N-terminus, the 966-residue chain is Serine/threonine-protein phosphatase 6 regulatory subunit 2 (966 aa).

Ser-289 carries the phosphoserine modification. Basic and acidic residues-rich tracts occupy residues 408–424 (TEAS…HENG) and 669–687 (GPER…HRDA). Disordered regions lie at residues 408-436 (TEAS…PAAS) and 657-707 (GAPH…VEGD). Phosphoserine is present on residues Ser-771 and Ser-828. Positions 819-856 (ASDSSSSGGSHSEDGDQKAASAMDAVSRGPGREAPPLP) are disordered.

Belongs to the SAPS family. As to quaternary structure, protein phosphatase 6 (PP6) holoenzyme is proposed to be a heterotrimeric complex formed by the catalytic subunit, a SAPS domain-containing subunit (PP6R) and an ankyrin repeat-domain containing regulatory subunit (ARS). Interacts with PPP6C and NFKBIE. Interacts with ANKRD28. In terms of tissue distribution, ubiquitously expressed with strongest expression in the testis followed by liver, heart, kidney, brain and placenta.

It localises to the cytoplasm. Functionally, regulatory subunit of protein phosphatase 6 (PP6). May function as a scaffolding PP6 subunit. Involved in the PP6-mediated dephosphorylation of NFKBIE opposing its degradation in response to TNF-alpha. The sequence is that of Serine/threonine-protein phosphatase 6 regulatory subunit 2 (PPP6R2) from Homo sapiens (Human).